We begin with the raw amino-acid sequence, 555 residues long: Luciferin 2-monooxygenase (555 aa).

An N-terminal signal peptide occupies residues 1-11; sequence MKIIILSVILA. 2 VWFD domains span residues 80 to 266 and 319 to 494; these read IECR…EYCK and GTCV…RLCN. 4 disulfide bridges follow: Cys-82/Cys-222, Cys-321/Cys-454, Cys-343/Cys-493, and Cys-352/Cys-451. Residues Asn-186 and Asn-408 are each glycosylated (N-linked (GlcNAc...) asparagine).

The cysteine residues presumably exist in intramolecular disulfide bridges. Post-translationally, the N-terminus is blocked.

The enzyme catalyses Cypridina luciferin + O2 = oxidized Cypridina luciferin + hnu + CO2. The chain is Luciferin 2-monooxygenase from Vargula hilgendorfii (Sea firefly).